Reading from the N-terminus, the 162-residue chain is Malaria protein EXP-1 (162 aa).

The first 22 residues, 1-22 (MKILSVFFLVLFFIIFNKESLA), serve as a signal peptide directing secretion. The chain crosses the membrane as a helical span at residues 80 to 101 (VLAGLLGVVSTVLLGGVGLVLY). Residues 109–162 (PFKIGSSDPADNANPDADSESNGEPNADPQVTAQDVTPEQPQGDDNNLVSGPEH) form a disordered region. Residues 114-130 (SSDPADNANPDADSESN) show a composition bias toward low complexity. Residues 120 to 137 (NANPDADSESNGEPNADP) are epitope (deduced). The segment covering 137–162 (PQVTAQDVTPEQPQGDDNNLVSGPEH) has biased composition (polar residues).

The protein resides in the parasitophorous vacuole membrane. This is Malaria protein EXP-1 (EXP-1) from Plasmodium falciparum.